Here is a 326-residue protein sequence, read N- to C-terminus: DNA-directed RNA polymerase subunit alpha (326 aa).

An alpha N-terminal domain (alpha-NTD) region spans residues 1–232; it reads MQGSARDFLK…EQLSSFVELE (232 aa). Residues 246–326 are alpha C-terminal domain (alpha-CTD); the sequence is FDPQLLAAVD…NWPPVDLMSE (81 aa).

It belongs to the RNA polymerase alpha chain family. Homodimer. The RNAP catalytic core consists of 2 alpha, 1 beta, 1 beta' and 1 omega subunit. When a sigma factor is associated with the core the holoenzyme is formed, which can initiate transcription.

It catalyses the reaction RNA(n) + a ribonucleoside 5'-triphosphate = RNA(n+1) + diphosphate. Its function is as follows. DNA-dependent RNA polymerase catalyzes the transcription of DNA into RNA using the four ribonucleoside triphosphates as substrates. The polypeptide is DNA-directed RNA polymerase subunit alpha (Vesicomyosocius okutanii subsp. Calyptogena okutanii (strain HA)).